Consider the following 559-residue polypeptide: Asparagine--tRNA ligase, cytoplasmic (559 aa).

Ser72 is modified (phosphoserine). The tract at residues 82–102 is disordered; sequence HREQMKNDSREKKEAEDNLRR. Lys255 is modified (N6-acetyllysine). Ser493 carries the post-translational modification Phosphoserine. Lys501 carries the N6-acetyllysine modification.

It belongs to the class-II aminoacyl-tRNA synthetase family. Homodimer.

The protein resides in the cytoplasm. The enzyme catalyses tRNA(Asn) + L-asparagine + ATP = L-asparaginyl-tRNA(Asn) + AMP + diphosphate + H(+). Functionally, catalyzes the attachment of asparagine to tRNA(Asn) in a two-step reaction: asparagine is first activated by ATP to form Asn-AMP and then transferred to the acceptor end of tRNA(Asn). In addition to its essential role in protein synthesis, acts as a signaling molecule that induced migration of CCR3-expressing cells. Has an essential role in the development of the cerebral cortex, being required for proper proliferation of radial glial cells. The sequence is that of Asparagine--tRNA ligase, cytoplasmic from Mus musculus (Mouse).